The following is a 181-amino-acid chain: 6,7-dimethyl-8-ribityllumazine synthase (181 aa).

5-amino-6-(D-ribitylamino)uracil contacts are provided by residues tyrosine 27, 58–60, and 87–89; these read ALE and CVI. 92-93 provides a ligand contact to (2S)-2-hydroxy-3-oxobutyl phosphate; that stretch reads ET. Histidine 95 functions as the Proton donor in the catalytic mechanism. Asparagine 120 is a 5-amino-6-(D-ribitylamino)uracil binding site. A (2S)-2-hydroxy-3-oxobutyl phosphate-binding site is contributed by arginine 134.

Belongs to the DMRL synthase family.

The enzyme catalyses (2S)-2-hydroxy-3-oxobutyl phosphate + 5-amino-6-(D-ribitylamino)uracil = 6,7-dimethyl-8-(1-D-ribityl)lumazine + phosphate + 2 H2O + H(+). Its pathway is cofactor biosynthesis; riboflavin biosynthesis; riboflavin from 2-hydroxy-3-oxobutyl phosphate and 5-amino-6-(D-ribitylamino)uracil: step 1/2. Its function is as follows. Catalyzes the formation of 6,7-dimethyl-8-ribityllumazine by condensation of 5-amino-6-(D-ribitylamino)uracil with 3,4-dihydroxy-2-butanone 4-phosphate. This is the penultimate step in the biosynthesis of riboflavin. This chain is 6,7-dimethyl-8-ribityllumazine synthase, found in Methylobacterium nodulans (strain LMG 21967 / CNCM I-2342 / ORS 2060).